A 65-amino-acid chain; its full sequence is Large ribosomal subunit protein bL35 (65 aa).

This sequence belongs to the bacterial ribosomal protein bL35 family.

The chain is Large ribosomal subunit protein bL35 from Geobacter sp. (strain M21).